The following is a 218-amino-acid chain: Hypoxanthine-guanine phosphoribosyltransferase (218 aa).

K69 lines the GMP pocket. An N6-acetyllysine modification is found at K103. Residue K115 forms a Glycyl lysine isopeptide (Lys-Gly) (interchain with G-Cter in SUMO1); alternate linkage. A Glycyl lysine isopeptide (Lys-Gly) (interchain with G-Cter in SUMO2); alternate cross-link involves residue K115. GMP contacts are provided by residues E134–T142, K166, K186–V188, and D194. D138 (proton acceptor) is an active-site residue. T142 carries the post-translational modification Phosphothreonine. A Mg(2+)-binding site is contributed by D194.

It belongs to the purine/pyrimidine phosphoribosyltransferase family. Homotetramer. The cofactor is Mg(2+).

It localises to the cytoplasm. The catalysed reaction is IMP + diphosphate = hypoxanthine + 5-phospho-alpha-D-ribose 1-diphosphate. It carries out the reaction GMP + diphosphate = guanine + 5-phospho-alpha-D-ribose 1-diphosphate. It participates in purine metabolism; IMP biosynthesis via salvage pathway; IMP from hypoxanthine: step 1/1. Its function is as follows. Converts guanine to guanosine monophosphate, and hypoxanthine to inosine monophosphate. Transfers the 5-phosphoribosyl group from 5-phosphoribosylpyrophosphate onto the purine. Plays a central role in the generation of purine nucleotides through the purine salvage pathway. The polypeptide is Hypoxanthine-guanine phosphoribosyltransferase (Hprt1) (Rattus norvegicus (Rat)).